The chain runs to 447 residues: uncharacterized protein (447 aa).

The protein to E.coli plasmid IncP-alpha RP4 protein TraN.

This is an uncharacterized protein from Haemophilus influenzae (strain ATCC 51907 / DSM 11121 / KW20 / Rd).